Here is a 537-residue protein sequence, read N- to C-terminus: Zinc finger and BTB domain-containing protein 18 (537 aa).

Residues 24–91 (CDSTVLVGDA…MYEGKLQFKS (68 aa)) form the BTB domain. A compositionally biased stretch (basic and acidic residues) spans 122-143 (TAEADSTKREEDTSSCSDKVES). Disordered regions lie at residues 122–232 (TAEA…RVSA) and 335–355 (ASEL…LGGD). 2 stretches are compositionally biased toward low complexity: residues 182 to 195 (RLPS…TTSP) and 208 to 229 (SPAG…ASRR). 4 consecutive C2H2-type zinc fingers follow at residues 385 to 407 (FMCP…LSTH), 425 to 447 (PTCS…ERTH), 453 to 475 (YTCT…AVVH), and 481 to 504 (HACK…RKFH).

Belongs to the krueppel C2H2-type zinc-finger protein family. ZBTB18 subfamily.

The protein resides in the nucleus. Functionally, transcriptional repressor that plays a role in various developmental processes. Specifically binds the consensus DNA sequence 5'-[AC]ACATCTG[GT][AC]-3' which contains the E box core, and acts by recruiting chromatin remodeling multiprotein complexes. The protein is Zinc finger and BTB domain-containing protein 18 (zbtb18) of Danio rerio (Zebrafish).